Consider the following 124-residue polypeptide: Large ribosomal subunit protein bL12 (124 aa).

This sequence belongs to the bacterial ribosomal protein bL12 family. As to quaternary structure, homodimer. Part of the ribosomal stalk of the 50S ribosomal subunit. Forms a multimeric L10(L12)X complex, where L10 forms an elongated spine to which 2 to 4 L12 dimers bind in a sequential fashion. Binds GTP-bound translation factors.

Its function is as follows. Forms part of the ribosomal stalk which helps the ribosome interact with GTP-bound translation factors. Is thus essential for accurate translation. The sequence is that of Large ribosomal subunit protein bL12 from Brucella abortus (strain S19).